We begin with the raw amino-acid sequence, 211 residues long: Large ribosomal subunit protein uL4 (211 aa).

The interval 40 to 85 (QQAHSRQGTASTLTRSEVRGGGRKPYKQKGTGRARQGSVRTPLRPG) is disordered. The segment covering 41–54 (QAHSRQGTASTLTR) has biased composition (polar residues). A compositionally biased stretch (basic residues) spans 60 to 71 (GGRKPYKQKGTG).

It belongs to the universal ribosomal protein uL4 family. As to quaternary structure, part of the 50S ribosomal subunit.

Functionally, one of the primary rRNA binding proteins, this protein initially binds near the 5'-end of the 23S rRNA. It is important during the early stages of 50S assembly. It makes multiple contacts with different domains of the 23S rRNA in the assembled 50S subunit and ribosome. In terms of biological role, forms part of the polypeptide exit tunnel. The polypeptide is Large ribosomal subunit protein uL4 (Synechococcus sp. (strain CC9311)).